Reading from the N-terminus, the 311-residue chain is L-lactate dehydrogenase (311 aa).

Residues V12, D33, K38, Y63, and 77–78 (GA) contribute to the NAD(+) site. Residues Q80 and R86 each contribute to the substrate site. NAD(+)-binding positions include S99, 116–118 (VTN), and S141. 118-121 (NPVD) contacts substrate. 146-149 (DSSR) contacts substrate. 2 residues coordinate beta-D-fructose 1,6-bisphosphate: R151 and H166. The Proton acceptor role is filled by H173. Y219 is modified (phosphotyrosine). Position 228 (T228) interacts with substrate.

It belongs to the LDH/MDH superfamily. LDH family. As to quaternary structure, homotetramer.

The protein resides in the cytoplasm. It catalyses the reaction (S)-lactate + NAD(+) = pyruvate + NADH + H(+). The protein operates within fermentation; pyruvate fermentation to lactate; (S)-lactate from pyruvate: step 1/1. Allosterically activated by fructose 1,6-bisphosphate (FBP). Catalyzes the conversion of lactate to pyruvate. The chain is L-lactate dehydrogenase from Thermoanaerobacterium saccharolyticum (strain DSM 8691 / JW/SL-YS485).